The following is a 329-amino-acid chain: Protein Brevis radix-like 4 (329 aa).

The disordered stretch occupies residues 12 to 37 (SGTSRHHGQQRRGGSPPPRGRTTSVY). Residues 86–142 (REWVAQVEPGVQITFVSLAGGGGNDLKRIRFSREMYDKWQAQKWWGENNERIMELYN) form the BRX 1 domain. The disordered stretch occupies residues 151–263 (LPTPPRSDDG…TTSCSSRDEV (113 aa)). Composition is skewed to low complexity over residues 222-236 (SNPS…QQPQ) and 243-252 (AAASDAMDAA). Positions 253–263 (RTTSCSSRDEV) are enriched in polar residues. The BRX 2 domain maps to 274 to 329 (TEWVIQDEPGVYITVRELADGTRELRRVRFSRERFAELNAKLWWEENKERIQAQYL).

This sequence belongs to the BRX family.

It is found in the nucleus. This chain is Protein Brevis radix-like 4 (BRXL4), found in Oryza sativa subsp. japonica (Rice).